Reading from the N-terminus, the 243-residue chain is 7-cyano-7-deazaguanine synthase (243 aa).

9–19 contributes to the ATP binding site; that stretch reads FSGGQDSTTCL. Cys205, Cys220, Cys223, and Cys226 together coordinate Zn(2+).

This sequence belongs to the QueC family. Zn(2+) serves as cofactor.

The enzyme catalyses 7-carboxy-7-deazaguanine + NH4(+) + ATP = 7-cyano-7-deazaguanine + ADP + phosphate + H2O + H(+). It participates in purine metabolism; 7-cyano-7-deazaguanine biosynthesis. Its function is as follows. Catalyzes the ATP-dependent conversion of 7-carboxy-7-deazaguanine (CDG) to 7-cyano-7-deazaguanine (preQ(0)). The chain is 7-cyano-7-deazaguanine synthase from Albidiferax ferrireducens (strain ATCC BAA-621 / DSM 15236 / T118) (Rhodoferax ferrireducens).